A 451-amino-acid polypeptide reads, in one-letter code: DNA polymerase IV (451 aa).

A UmuC domain is found at 5-187 (VIHVDMDAFF…LPVGRLWGVG (183 aa)). Residues D9 and D104 each contribute to the Mg(2+) site. E105 is an active-site residue.

Belongs to the DNA polymerase type-Y family. Monomer. Requires Mg(2+) as cofactor.

Its subcellular location is the cytoplasm. It catalyses the reaction DNA(n) + a 2'-deoxyribonucleoside 5'-triphosphate = DNA(n+1) + diphosphate. Poorly processive, error-prone DNA polymerase involved in untargeted mutagenesis. Copies undamaged DNA at stalled replication forks, which arise in vivo from mismatched or misaligned primer ends. These misaligned primers can be extended by PolIV. Exhibits no 3'-5' exonuclease (proofreading) activity. May be involved in translesional synthesis, in conjunction with the beta clamp from PolIII. This is DNA polymerase IV from Corynebacterium diphtheriae (strain ATCC 700971 / NCTC 13129 / Biotype gravis).